A 300-amino-acid polypeptide reads, in one-letter code: Flaviolin linalyltransferase (300 aa).

This sequence belongs to the aromatic prenyltransferase family. Monomer.

It carries out the reaction flaviolin + (2E)-geranyl diphosphate = 3-linalylflaviolin + diphosphate. Does not require magnesium or any other divalent metal ions for activity. Involved in the biosynthesis of furanonaphthoquinone I (FNQ I). Catalyzes C- and O-prenylations of different phenolic substrates. With flaviolin as substrate, catalyzes the formation of a carbon-carbon-bond between C-3 (rather than C-1) of geranyl diphosphate and C-3 of flaviolin. With 1,3-dihydroxynaphthalene and 4-hydroxybenzoate as substrates, catalyzes O-prenylations. This is Flaviolin linalyltransferase from Streptomyces virginiae (Streptomyces cinnamonensis).